The primary structure comprises 1452 residues: Receptor-type tyrosine-protein phosphatase mu (1452 aa).

A signal peptide spans 1–20 (MRTLGTCLVTLAGLLLTAAG). Topologically, residues 21–742 (ETFSGGCLFD…PEKQTDHTVK (722 aa)) are extracellular. Residues 22–184 (TFSGGCLFDE…VKVLGHPCTR (163 aa)) form the MAM domain. A disulfide bridge connects residues Cys27 and Cys36. 4 N-linked (GlcNAc...) asparagine glycosylation sites follow: Asn72, Asn92, Asn131, and Asn249. Intrachain disulfides connect Cys96/Cys182 and Cys206/Cys260. An Ig-like C2-type domain is found at 186–277 (PHFLRIQNVE…VGISNYAELV (92 aa)). Fibronectin type-III domains are found at residues 284–379 (PIAP…CADP), 382–480 (GPRK…TDED), 481–587 (LPGA…SAPS), and 589–671 (PAYE…DSLQ). Residues Asn406, Asn414, Asn454, Asn534, Asn544, Asn598, Asn651, and Asn681 are each glycosylated (N-linked (GlcNAc...) asparagine). A helical membrane pass occupies residues 743-764 (IAGVIAGILLFVIIFLGVVLVM). At 765 to 1452 (KKRKLAKKRK…EVALEYLNSG (688 aa)) the chain is on the cytoplasmic side. The residue at position 821 (Ser821) is a Phosphoserine. 2 Tyrosine-protein phosphatase domains span residues 900-1154 (FKEE…ILEA) and 1186-1448 (IKEE…ALEY). Residues Asp1063, 1095–1101 (CSAGAGR), and Gln1139 each bind substrate. Cys1095 (phosphocysteine intermediate) is an active-site residue. The active-site Phosphocysteine intermediate is Cys1389.

Belongs to the protein-tyrosine phosphatase family. Receptor class 2B subfamily. Homodimer. In terms of tissue distribution, most abundant in lung, less in brain and heart.

The protein localises to the cell membrane. The catalysed reaction is O-phospho-L-tyrosyl-[protein] + H2O = L-tyrosyl-[protein] + phosphate. In terms of biological role, receptor protein-tyrosine phosphatase that mediates homotypic cell-cell interactions and plays a role in adipogenic differentiation via modulation of p120 catenin/CTNND1 phosphorylation. Promotes CTNND1 dephosphorylation and prevents its cytoplasmic localization where it inhibits SLC2A4 membrane trafficking. In turn, SLC2A4 is directed to the plasma membrane and performs its glucose transporter function. The polypeptide is Receptor-type tyrosine-protein phosphatase mu (Ptprm) (Mus musculus (Mouse)).